The sequence spans 94 residues: MSCEILRKLEEVIRRRIEEKNPESYTYRLYSSGIHNVARKVGEEAVEVAVAALAEGKSRIVEEAADLLYHLLVLLNSTGLSLGDVCAELERRMR.

Belongs to the PRA-PH family.

It localises to the cytoplasm. The enzyme catalyses 1-(5-phospho-beta-D-ribosyl)-ATP + H2O = 1-(5-phospho-beta-D-ribosyl)-5'-AMP + diphosphate + H(+). The protein operates within amino-acid biosynthesis; L-histidine biosynthesis; L-histidine from 5-phospho-alpha-D-ribose 1-diphosphate: step 2/9. In Pyrobaculum islandicum (strain DSM 4184 / JCM 9189 / GEO3), this protein is Phosphoribosyl-ATP pyrophosphatase.